The chain runs to 669 residues: DNA ligase (669 aa).

Residues Asp-31–Asp-35, Ser-80–Leu-81, and Glu-112 each bind NAD(+). The active-site N6-AMP-lysine intermediate is Lys-114. The NAD(+) site is built by Arg-135, Glu-172, Lys-289, and Lys-313. Residues Cys-407, Cys-410, Cys-425, and Cys-431 each coordinate Zn(2+). The BRCT domain occupies Ser-591–Asn-669.

It belongs to the NAD-dependent DNA ligase family. LigA subfamily. Mg(2+) serves as cofactor. The cofactor is Mn(2+).

It catalyses the reaction NAD(+) + (deoxyribonucleotide)n-3'-hydroxyl + 5'-phospho-(deoxyribonucleotide)m = (deoxyribonucleotide)n+m + AMP + beta-nicotinamide D-nucleotide.. Functionally, DNA ligase that catalyzes the formation of phosphodiester linkages between 5'-phosphoryl and 3'-hydroxyl groups in double-stranded DNA using NAD as a coenzyme and as the energy source for the reaction. It is essential for DNA replication and repair of damaged DNA. The protein is DNA ligase of Aliivibrio salmonicida (strain LFI1238) (Vibrio salmonicida (strain LFI1238)).